The chain runs to 179 residues: MARLHDYYKDIVIKEMMCKFSYASVMQVPRVTKITLNMGVGEAVSDKKLLDSAMSDLAAISAQKPLVTKARKSVAGFSIRQGYPIGCKVTLRGKRMWEFLERLLSIAIPRIRDFRGLSKKSFDGRGNYNMGVSEQIIFPEINYDAIVKIFGLDISITTTAKSDDEGLALLAAFKFPFRK.

Belongs to the universal ribosomal protein uL5 family. As to quaternary structure, part of the 50S ribosomal subunit; part of the 5S rRNA/L5/L18/L25 subcomplex. Contacts the 5S rRNA and the P site tRNA. Forms a bridge to the 30S subunit in the 70S ribosome.

In terms of biological role, this is one of the proteins that bind and probably mediate the attachment of the 5S RNA into the large ribosomal subunit, where it forms part of the central protuberance. In the 70S ribosome it contacts protein S13 of the 30S subunit (bridge B1b), connecting the 2 subunits; this bridge is implicated in subunit movement. Contacts the P site tRNA; the 5S rRNA and some of its associated proteins might help stabilize positioning of ribosome-bound tRNAs. This chain is Large ribosomal subunit protein uL5, found in Hamiltonella defensa subsp. Acyrthosiphon pisum (strain 5AT).